The sequence spans 38 residues: Natriuretic peptide DNP (38 aa).

A disulfide bond links Cys7 and Cys23. The tract at residues 19–38 (SNLGCPSLRDPRPNAPSTSA) is disordered.

Belongs to the natriuretic peptide family. Expressed by the venom gland.

Its subcellular location is the secreted. Exhibits vasodilator, natriuretic and diuretic properties in animal models and human tissues. Acts by stimulating cGMP via the natriuretic peptide receptor 1 (NPR1). Is a poor agonist of the atrial natriuretic peptide receptor 2 (NPR2). Is not degraded by neutral endopeptidase (NEP/MME). Binds to atrial natriuretic peptide clearance receptor (NPR-C/NPR3), which may be responsible of the removal of DNP from the circulation. Increases calcium uptake and induces histamine release from rat peritoneal mast cells. Increases calcium-activated potassium (KCa) current in gastric antral circular smooth muscle cells by increasing cGMP production and activating inositol trisphosphate receptors (IP3Rs). In vivo, reduces both systolic and diastolic blood pressure with no effect on heart rate, when intravenously injected in conscious rabbits. The sequence is that of Natriuretic peptide DNP from Dendroaspis angusticeps (Eastern green mamba).